Consider the following 908-residue polypeptide: Glutamate receptor ionotropic, kainate 2 (908 aa).

A signal peptide spans 1–31; the sequence is MKIISPVLSNLVFSRSIKVLLCLLWIGYSQG. Residues 32 to 561 lie on the Extracellular side of the membrane; it reads TTHVLRFGGI…VFSFLNPLSP (530 aa). N-linked (GlcNAc...) asparagine glycosylation is found at asparagine 67, asparagine 73, asparagine 275, asparagine 378, asparagine 412, asparagine 423, and asparagine 430. Cysteine 96 and cysteine 347 are joined by a disulfide. Residues proline 516, alanine 518, and arginine 523 each contribute to the L-glutamate site. Asparagine 546 is a glycosylation site (N-linked (GlcNAc...) asparagine). Residues 562–582 form a helical membrane-spanning segment; the sequence is DIWMYILLAYLGVSCVLFVIA. Residues 583–638 are Cytoplasmic-facing; sequence RFSPYEWYNPHPCNPDSDVVENNFTLLNSFWFGVGALMQQGSELMPKALSTRIVGG. A helical transmembrane segment spans residues 639–659; that stretch reads IWWFFTLIIISSYTANLAAFL. The Extracellular portion of the chain corresponds to 660-819; the sequence is TVERMESPID…KEASALGVQN (160 aa). L-glutamate is bound by residues alanine 689, threonine 690, and glutamate 738. A disulfide bond links cysteine 750 and cysteine 804. Asparagine 751 is a glycosylation site (N-linked (GlcNAc...) asparagine). The chain crosses the membrane as a helical span at residues 820–840; that stretch reads IGGIFIVLAAGLVLSVFVAVG. Over 841–908 the chain is Cytoplasmic; the sequence is EFLYKSKKNA…RRLPGKETMA (68 aa). Phosphoserine; by PKC occurs at positions 846 and 868. Lysine 886 participates in a covalent cross-link: Glycyl lysine isopeptide (Lys-Gly) (interchain with G-Cter in SUMO1).

The protein belongs to the glutamate-gated ion channel (TC 1.A.10.1) family. GRIK2 subfamily. In terms of assembly, homotetramer and heterotetramer with GRIK5. Tetramers may be formed by the dimerization of dimers. Assembles into a kainate-gated homomeric channel that does not bind AMPA. Can form functional heteromeric receptors with GRIK4 and GRIK5. Can form functional heteromeric receptors with GRIK3. Interacts with DLG4. Interacts with NETO2. Interacts (via C-terminus) with KLHL17 (via kelch repeats); the interaction targets GRIK2 for degradation via ubiquitin-proteasome pathway. In terms of processing, sumoylation mediates kainate receptor-mediated endocytosis and regulates synaptic transmission. Sumoylation is enhanced by PIAS3 and desumoylated by SENP1. Post-translationally, ubiquitinated. Ubiquitination regulates the GRIK2 levels at the synapse by leading kainate receptor degradation through proteasome. Phosphorylated by PKC at Ser-868 upon agonist activation, this directly enhance sumoylation. As to expression, highest expression is found in the olfactory lobe, piriform cortex, dentate gyrus, hippocampus, granular cell layer of the cerebellum, and in caudate-putamen.

It is found in the cell membrane. The protein localises to the postsynaptic cell membrane. The catalysed reaction is Ca(2+)(in) = Ca(2+)(out). It carries out the reaction Na(+)(in) = Na(+)(out). Cold receptor activity activated by temperatures between 10-19 degrees Celsius. In terms of biological role, ionotropic glutamate receptor that functions as a cation-permeable ligand-gated ion channel, gated by L-glutamate and the glutamatergic agonist kainic acid. L-glutamate acts as an excitatory neurotransmitter at many synapses in the central nervous system. Binding of the excitatory neurotransmitter L-glutamate induces a conformation change, leading to the opening of the cation channel, and thereby converts the chemical signal to an electrical impulse. The receptor then desensitizes rapidly and enters a transient inactive state, characterized by the presence of bound agonist. Modulates cell surface expression of NETO2. In association with GRIK3, involved in presynaptic facilitation of glutamate release at hippocampal mossy fiber synapses. Its function is as follows. Independent of its ionotropic glutamate receptor activity, acts as a thermoreceptor conferring sensitivity to cold temperatures. Functions in dorsal root ganglion neurons. This Rattus norvegicus (Rat) protein is Glutamate receptor ionotropic, kainate 2 (Grik2).